The primary structure comprises 463 residues: D(2)-like dopamine receptor (463 aa).

The Extracellular portion of the chain corresponds to 1–35 (MDVFTQYAYNDSIFDNGTWSANETTKDETHPYNYY). N10, N16, and N22 each carry an N-linked (GlcNAc...) asparagine glycan. A helical transmembrane segment spans residues 36–58 (AMLLTLLIFVIVFGNVLVCMAVS). At 59–68 (REKALQTTTN) the chain is on the cytoplasmic side. The chain crosses the membrane as a helical span at residues 69-91 (YLIVSLAVADLLVATLVMPWVVY). At 92–106 (LEVVGEWRFSKIHCD) the chain is on the extracellular side. C105 and C183 are disulfide-bonded. A helical transmembrane segment spans residues 107-128 (IFVTLDVMMCTASILNLCAISI). Over 129-149 (DRYTAVAMPMLYNTRYSSRRR) the chain is Cytoplasmic. A helical transmembrane segment spans residues 150–170 (VTVMISVVWVLSFAISCPLLF). Over 171-189 (GLNNTATRDQSLCFIANPA) the chain is Extracellular. The chain crosses the membrane as a helical span at residues 190–214 (FVVYSSIVSFYVPFIVTLLVYVQIY). Residues 215–392 (VVLRKRRKRV…SQQKEKKATQ (178 aa)) are Cytoplasmic-facing. The interval 295–362 (CGGSHKQPPP…KEAQGNPAPV (68 aa)) is disordered. Positions 315–329 (PATSHQLLMSTKANA) are enriched in polar residues. Basic and acidic residues predominate over residues 341 to 353 (EGQRTEKNGDPTK). The chain crosses the membrane as a helical span at residues 393–414 (MLAIVLGVFIICWLPFFITHIL). Over 415 to 429 (NTHCTRCKVPAEMYN) the chain is Extracellular. C418 and C421 are disulfide-bonded. The chain crosses the membrane as a helical span at residues 430–451 (AFTWLGYVNSAVNPIIYTTFNV). The Cytoplasmic segment spans residues 452–463 (EFRKAFIKILHC).

This sequence belongs to the G-protein coupled receptor 1 family.

It is found in the cell membrane. Its function is as follows. Receptor for dopamine. This Takifugu rubripes (Japanese pufferfish) protein is D(2)-like dopamine receptor (d215).